The sequence spans 282 residues: Bifunctional protein FolD (282 aa).

NADP(+)-binding positions include 165-167 (NRS), Ser-190, and Ile-231.

This sequence belongs to the tetrahydrofolate dehydrogenase/cyclohydrolase family. In terms of assembly, homodimer.

The enzyme catalyses (6R)-5,10-methylene-5,6,7,8-tetrahydrofolate + NADP(+) = (6R)-5,10-methenyltetrahydrofolate + NADPH. The catalysed reaction is (6R)-5,10-methenyltetrahydrofolate + H2O = (6R)-10-formyltetrahydrofolate + H(+). The protein operates within one-carbon metabolism; tetrahydrofolate interconversion. In terms of biological role, catalyzes the oxidation of 5,10-methylenetetrahydrofolate to 5,10-methenyltetrahydrofolate and then the hydrolysis of 5,10-methenyltetrahydrofolate to 10-formyltetrahydrofolate. This is Bifunctional protein FolD from Clostridium botulinum (strain Kyoto / Type A2).